An 87-amino-acid polypeptide reads, in one-letter code: Large ribosomal subunit protein bL27 (87 aa).

Positions 1–24 are disordered; it reads MAHKKGTGSTRNGRDSRSQRLGVK.

It belongs to the bacterial ribosomal protein bL27 family.

This Crocosphaera subtropica (strain ATCC 51142 / BH68) (Cyanothece sp. (strain ATCC 51142)) protein is Large ribosomal subunit protein bL27.